Consider the following 666-residue polypeptide: tRNA 5-methylaminomethyl-2-thiouridine biosynthesis bifunctional protein MnmC (666 aa).

The interval 1–253 (MSSPFVPIIT…KRHMICAHYE (253 aa)) is tRNA (mnm(5)s(2)U34)-methyltransferase. An FAD-dependent cmnm(5)s(2)U34 oxidoreductase region spans residues 283–666 (VGGGLAGCFI…FLRKKIIQGP (384 aa)).

This sequence in the N-terminal section; belongs to the methyltransferase superfamily. tRNA (mnm(5)s(2)U34)-methyltransferase family. It in the C-terminal section; belongs to the DAO family. FAD is required as a cofactor.

Its subcellular location is the cytoplasm. It carries out the reaction 5-aminomethyl-2-thiouridine(34) in tRNA + S-adenosyl-L-methionine = 5-methylaminomethyl-2-thiouridine(34) in tRNA + S-adenosyl-L-homocysteine + H(+). Functionally, catalyzes the last two steps in the biosynthesis of 5-methylaminomethyl-2-thiouridine (mnm(5)s(2)U) at the wobble position (U34) in tRNA. Catalyzes the FAD-dependent demodification of cmnm(5)s(2)U34 to nm(5)s(2)U34, followed by the transfer of a methyl group from S-adenosyl-L-methionine to nm(5)s(2)U34, to form mnm(5)s(2)U34. The polypeptide is tRNA 5-methylaminomethyl-2-thiouridine biosynthesis bifunctional protein MnmC (Legionella pneumophila (strain Lens)).